Consider the following 394-residue polypeptide: Elongation factor Tu (394 aa).

In terms of domain architecture, tr-type G spans 10-204 (LPHVNIGTIG…AVDEYIPTPT (195 aa)). A G1 region spans residues 19 to 26 (GHVDHGKT). 19-26 (GHVDHGKT) is a GTP binding site. Thr26 provides a ligand contact to Mg(2+). Residues 60 to 64 (GITIN) form a G2 region. A G3 region spans residues 81-84 (DCPG). Residues 81–85 (DCPGH) and 136–139 (NKCD) contribute to the GTP site. The segment at 136–139 (NKCD) is G4. Residues 174–176 (SAL) form a G5 region.

This sequence belongs to the TRAFAC class translation factor GTPase superfamily. Classic translation factor GTPase family. EF-Tu/EF-1A subfamily. In terms of assembly, monomer.

Its subcellular location is the cytoplasm. The enzyme catalyses GTP + H2O = GDP + phosphate + H(+). Its function is as follows. GTP hydrolase that promotes the GTP-dependent binding of aminoacyl-tRNA to the A-site of ribosomes during protein biosynthesis. The protein is Elongation factor Tu of Mesoplasma florum (strain ATCC 33453 / NBRC 100688 / NCTC 11704 / L1) (Acholeplasma florum).